Reading from the N-terminus, the 226-residue chain is 7-cyano-7-deazaguanine synthase (226 aa).

12–22 (LSGGLDSATVV) serves as a coordination point for ATP. Zn(2+) is bound by residues Cys-191, Cys-201, Cys-204, and Cys-207.

Belongs to the QueC family. It depends on Zn(2+) as a cofactor.

The catalysed reaction is 7-carboxy-7-deazaguanine + NH4(+) + ATP = 7-cyano-7-deazaguanine + ADP + phosphate + H2O + H(+). The protein operates within purine metabolism; 7-cyano-7-deazaguanine biosynthesis. In terms of biological role, catalyzes the ATP-dependent conversion of 7-carboxy-7-deazaguanine (CDG) to 7-cyano-7-deazaguanine (preQ(0)). The chain is 7-cyano-7-deazaguanine synthase from Pseudomonas syringae pv. tomato (strain ATCC BAA-871 / DC3000).